The chain runs to 847 residues: Beta-galactosidase 1 (847 aa).

The signal sequence occupies residues 1 to 32 (MGSKPNAMKNVVAMAAVSALFLLGFLVCSVSG). The Proton donor role is filled by glutamate 190. Glutamate 259 serves as the catalytic Nucleophile. Residue asparagine 469 is glycosylated (N-linked (GlcNAc...) asparagine). Positions 761 to 847 (KPLHPKAHLQ…KKLAVEAVCA (87 aa)) constitute an SUEL-type lectin domain.

Belongs to the glycosyl hydrolase 35 family. Ubiquitous, at low levels.

Its subcellular location is the secreted. The protein localises to the extracellular space. It is found in the apoplast. The enzyme catalyses Hydrolysis of terminal non-reducing beta-D-galactose residues in beta-D-galactosides.. The protein is Beta-galactosidase 1 (BGAL1) of Arabidopsis thaliana (Mouse-ear cress).